A 402-amino-acid polypeptide reads, in one-letter code: Tumor necrosis factor receptor superfamily member 11B (402 aa).

The first 21 residues, 1-21 (MNKLLCCALVFLDISIKWTTQ), serve as a signal peptide directing secretion. TNFR-Cys repeat units follow at residues 24–62 (FPPK…KTVC), 64–105 (PCPD…NRVC), 106–142 (ECEE…NTVC), and 144–185 (RCPD…DNIC). 8 cysteine pairs are disulfide-bonded: C41–C54, C44–C62, C65–C80, C83–C97, C87–C105, C107–C118, C124–C142, and C145–C160. 2 N-linked (GlcNAc...) asparagine glycosylation sites follow: N165 and N178. The cysteines at positions 166 and 185 are disulfide-linked. Death domains lie at 198–269 (IDMT…DMVK) and 270–365 (KIIQ…VIQS).

Homodimer. Interacts with TNFSF10 and TNFSF11. N-glycosylated. Contains sialic acid residues.

The protein localises to the secreted. Its function is as follows. Acts as a decoy receptor for TNFSF11/RANKL and thereby neutralizes its function in osteoclastogenesis. Inhibits the activation of osteoclasts and promotes osteoclast apoptosis. Bone homeostasis seems to depend on the local ratio between TNFSF11 and TNFRSF11B. May also play a role in preventing arterial calcification. May act as decoy receptor for TNFSF10/TRAIL and protect against apoptosis. TNFSF10/TRAIL binding blocks the inhibition of osteoclastogenesis. The protein is Tumor necrosis factor receptor superfamily member 11B (TNFRSF11B) of Bos taurus (Bovine).